The sequence spans 132 residues: Nucleoid-associated protein EspR (132 aa).

The H-T-H motif DNA-binding region spans 38 to 50 (ITMSAPYLSQLRS).

As to quaternary structure, homodimer. Binds DNA as a dimer of dimers.

Its subcellular location is the cytoplasm. It localises to the nucleoid. In terms of biological role, virulence regulator that has both architectural and regulatory roles. Impacts cell wall functions and pathogenesis through regulation of multiple genes. The polypeptide is Nucleoid-associated protein EspR (Mycobacterium tuberculosis (strain CDC 1551 / Oshkosh)).